A 195-amino-acid chain; its full sequence is Holliday junction branch migration complex subunit RuvA (195 aa).

Residues 1-63 are domain I; the sequence is MIASVRGEVI…EDSMTLYGFV (63 aa). Residues 64 to 142 are domain II; it reads DGDARDLFLT…PVSAGGGAAV (79 aa). Residues 143–150 are flexible linker; the sequence is GGHAIRGP. The tract at residues 150-195 is domain III; it reads PVVEALVGLGFAAKQAEEATDKVLANDPEATTSSALRAALSMLGKK.

This sequence belongs to the RuvA family. Homotetramer. Forms an RuvA(8)-RuvB(12)-Holliday junction (HJ) complex. HJ DNA is sandwiched between 2 RuvA tetramers; dsDNA enters through RuvA and exits via RuvB. An RuvB hexamer assembles on each DNA strand where it exits the tetramer. Each RuvB hexamer is contacted by two RuvA subunits (via domain III) on 2 adjacent RuvB subunits; this complex drives branch migration. In the full resolvosome a probable DNA-RuvA(4)-RuvB(12)-RuvC(2) complex forms which resolves the HJ.

The protein resides in the cytoplasm. The RuvA-RuvB-RuvC complex processes Holliday junction (HJ) DNA during genetic recombination and DNA repair, while the RuvA-RuvB complex plays an important role in the rescue of blocked DNA replication forks via replication fork reversal (RFR). RuvA specifically binds to HJ cruciform DNA, conferring on it an open structure. The RuvB hexamer acts as an ATP-dependent pump, pulling dsDNA into and through the RuvAB complex. HJ branch migration allows RuvC to scan DNA until it finds its consensus sequence, where it cleaves and resolves the cruciform DNA. The protein is Holliday junction branch migration complex subunit RuvA of Mycolicibacterium smegmatis (strain ATCC 700084 / mc(2)155) (Mycobacterium smegmatis).